The sequence spans 135 residues: Small ribosomal subunit protein uS12 (135 aa).

3-methylthioaspartic acid is present on D89. Residues 108-135 (NKRTVSRSKYGTKKAKATDKKATDNKKK) form a disordered region. Residues 111 to 122 (TVSRSKYGTKKA) show a composition bias toward basic residues. The segment covering 123–135 (KATDKKATDNKKK) has biased composition (basic and acidic residues).

This sequence belongs to the universal ribosomal protein uS12 family. In terms of assembly, part of the 30S ribosomal subunit. Contacts proteins S8 and S17. May interact with IF1 in the 30S initiation complex.

With S4 and S5 plays an important role in translational accuracy. In terms of biological role, interacts with and stabilizes bases of the 16S rRNA that are involved in tRNA selection in the A site and with the mRNA backbone. Located at the interface of the 30S and 50S subunits, it traverses the body of the 30S subunit contacting proteins on the other side and probably holding the rRNA structure together. The combined cluster of proteins S8, S12 and S17 appears to hold together the shoulder and platform of the 30S subunit. This chain is Small ribosomal subunit protein uS12, found in Helicobacter pylori (strain P12).